The chain runs to 97 residues: Sorbitol dehydrogenase (97 aa).

Zn(2+) is bound at residue Cys-44. Tyr-50 provides a ligand contact to substrate. Residues His-69 and Glu-70 each contribute to the Zn(2+) site.

Belongs to the zinc-containing alcohol dehydrogenase family. As to quaternary structure, homotetramer. Zn(2+) serves as cofactor.

It localises to the mitochondrion membrane. The protein localises to the cell projection. The protein resides in the cilium. It is found in the flagellum. The enzyme catalyses xylitol + NAD(+) = D-xylulose + NADH + H(+). It carries out the reaction L-iditol + NAD(+) = keto-L-sorbose + NADH + H(+). The catalysed reaction is keto-D-fructose + NADH + H(+) = D-sorbitol + NAD(+). Its function is as follows. Polyol dehydrogenase that catalyzes the reversible NAD(+)-dependent oxidation of various sugar alcohols. Is active with xylitol, L-iditol and D-sorbitol (D-glucitol) as substrates, leading to the C2-oxidized products D-xylulose, L-sorbose and D-fructose, respectively. Is a key enzyme in the polyol pathway that interconverts glucose and fructose via sorbitol, which constitutes an important alternate route for glucose metabolism. May play a role in sperm motility by using sorbitol as an alternative energy source for sperm motility. The chain is Sorbitol dehydrogenase (SORD) from Sus scrofa (Pig).